The primary structure comprises 153 residues: Large ribosomal subunit protein uL13 (153 aa).

The protein belongs to the universal ribosomal protein uL13 family. Part of the 50S ribosomal subunit.

Its function is as follows. This protein is one of the early assembly proteins of the 50S ribosomal subunit, although it is not seen to bind rRNA by itself. It is important during the early stages of 50S assembly. This Xanthobacter autotrophicus (strain ATCC BAA-1158 / Py2) protein is Large ribosomal subunit protein uL13.